A 127-amino-acid chain; its full sequence is Glycine cleavage system H protein (127 aa).

The region spanning Thr24–Lys105 is the Lipoyl-binding domain. The residue at position 65 (Lys65) is an N6-lipoyllysine.

This sequence belongs to the GcvH family. In terms of assembly, the glycine cleavage system is composed of four proteins: P, T, L and H. It depends on (R)-lipoate as a cofactor.

Its function is as follows. The glycine cleavage system catalyzes the degradation of glycine. The H protein shuttles the methylamine group of glycine from the P protein to the T protein. The protein is Glycine cleavage system H protein of Chlorobium luteolum (strain DSM 273 / BCRC 81028 / 2530) (Pelodictyon luteolum).